The chain runs to 502 residues: Membrane protein insertase YidC (502 aa).

6 helical membrane-spanning segments follow: residues 12 to 32, 286 to 306, 312 to 332, 382 to 402, 409 to 429, and 452 to 472; these read FLIFTILMFLFITAYELFYIY, LDWGTLKIIVKPLFLFLYWIY, WVLSILVLTFIVRIFLFPLGY, LPILLQIPIFFALYKVLIITV, FLWIPSLADKDPYYILPVIMG, and ITSVAFTLLFINFPAGLVLYW.

The protein belongs to the OXA1/ALB3/YidC family. Type 1 subfamily. As to quaternary structure, interacts with the Sec translocase complex via SecD. Specifically interacts with transmembrane segments of nascent integral membrane proteins during membrane integration.

Its subcellular location is the cell membrane. Functionally, required for the insertion and/or proper folding and/or complex formation of integral membrane proteins into the membrane. Involved in integration of membrane proteins that insert both dependently and independently of the Sec translocase complex, as well as at least some lipoproteins. Aids folding of multispanning membrane proteins. This Aquifex aeolicus (strain VF5) protein is Membrane protein insertase YidC.